The following is a 274-amino-acid chain: Kit ligand (274 aa).

The signal sequence occupies residues 1 to 25 (MKKTQTWIITCIYLQLLLFNPLVRT). The Extracellular segment spans residues 26–215 (KGICRNRVTD…ANPLGDSNLQ (190 aa)). Disulfide bonds link Cys29/Cys114 and Cys68/Cys164. N-linked (GlcNAc...) asparagine glycans are attached at residues Asn90, Asn97, Asn145, and Asn196. A helical transmembrane segment spans residues 216–238 (WAAMALPAFFSLVIGFAFGALYW). Topologically, residues 239 to 274 (KKKQPNLTRTAENIQINEEDNEISMLQEKEREFQEV) are cytoplasmic.

Belongs to the SCF family. Homodimer, non-covalently linked. Heterotetramer with KIT, binding two KIT molecules; thereby mediates KIT dimerization and subsequent activation by autophosphorylation. A soluble form is produced by proteolytic processing of isoform 1 in the extracellular domain.

Its subcellular location is the cytoplasm. It is found in the cytoskeleton. The protein localises to the cell membrane. The protein resides in the cell projection. It localises to the lamellipodium. Its subcellular location is the filopodium. It is found in the secreted. Ligand for the receptor-type protein-tyrosine kinase KIT. Plays an essential role in the regulation of cell survival and proliferation, hematopoiesis, stem cell maintenance, gametogenesis, mast cell development, migration and function, and in melanogenesis. KITLG/SCF binding can activate several signaling pathways. Promotes phosphorylation of PIK3R1, the regulatory subunit of phosphatidylinositol 3-kinase, and subsequent activation of the kinase AKT1. KITLG/SCF and KIT also transmit signals via GRB2 and activation of RAS, RAF1 and the MAP kinases MAPK1/ERK2 and/or MAPK3/ERK1. KITLG/SCF and KIT promote activation of STAT family members STAT1, STAT3 and STAT5. KITLG/SCF and KIT promote activation of PLCG1, leading to the production of the cellular signaling molecules diacylglycerol and inositol 1,4,5-trisphosphate. KITLG/SCF acts synergistically with other cytokines, probably interleukins. The protein is Kit ligand (KITLG) of Neovison vison (American mink).